A 126-amino-acid chain; its full sequence is Small ribosomal subunit protein uS13 (126 aa).

The segment at 92-126 (HRRGLPVRGQRTKTNARTRKGPKRTVAGKKKAGRK) is disordered.

It belongs to the universal ribosomal protein uS13 family. In terms of assembly, part of the 30S ribosomal subunit. Forms a loose heterodimer with protein S19. Forms two bridges to the 50S subunit in the 70S ribosome.

Functionally, located at the top of the head of the 30S subunit, it contacts several helices of the 16S rRNA. In the 70S ribosome it contacts the 23S rRNA (bridge B1a) and protein L5 of the 50S subunit (bridge B1b), connecting the 2 subunits; these bridges are implicated in subunit movement. Contacts the tRNAs in the A and P-sites. In Kineococcus radiotolerans (strain ATCC BAA-149 / DSM 14245 / SRS30216), this protein is Small ribosomal subunit protein uS13.